Reading from the N-terminus, the 311-residue chain is Heme A synthase (311 aa).

Residues 1–6 lie on the Cytoplasmic side of the membrane; the sequence is MQRFIK. The helical transmembrane segment at 7–27 threads the bilayer; the sequence is WLAVITSLDLLIVLLGGALVT. Over 28–62 the chain is Extracellular; it reads KTGSGQGCGKSWPLCNGEFVPSNLSMETIIELSHR. Cysteines 35 and 42 form a disulfide. The active site involves Glu-58. A heme o-binding site is contributed by His-61. Residues 63–83 traverse the membrane as a helical segment; it reads LTSGSAGILVTLLCILSWKYY. The Cytoplasmic segment spans residues 84–91; sequence KHVRETKT. The chain crosses the membrane as a helical span at residues 92 to 112; that stretch reads LAILSFVFLVAQALMGAAAVV. The Extracellular segment spans residues 113–121; sequence WGQMPAVLA. A helical transmembrane segment spans residues 122-142; that stretch reads IHFGISLISFASVILLTCLIF. His-123 is a binding site for heme o. Topologically, residues 143 to 159 are cytoplasmic; the sequence is EIDQKFDARSLIMDKKM. A helical membrane pass occupies residues 160 to 180; the sequence is KFHIYGVTIYCYLVVYTGALV. Residues 181–211 lie on the Extracellular side of the membrane; that stretch reads RHERASLACPDFPLCSKNRPMPTQLHEWVQM. An intrachain disulfide couples Cys-189 to Cys-195. The helical transmembrane segment at 212–232 threads the bilayer; that stretch reads GHRLAAMLIFVWILYAMILAI. Residue His-213 participates in heme b binding. Residues 233–243 lie on the Cytoplasmic side of the membrane; it reads RHYKQQPVVYW. Residues 244-264 traverse the membrane as a helical segment; the sequence is GWIISFILVTLQAIVGILVVF. Topologically, residues 265–271 are extracellular; it reads TNASLAM. A helical transmembrane segment spans residues 272–292; sequence ALLHSLFISCLFAVLCYLVML. A heme b-binding site is contributed by His-275. The Cytoplasmic portion of the chain corresponds to 293 to 311; it reads GTRSKVNAKEAASTSKQTK.

It belongs to the COX15/CtaA family. Type 1 subfamily. In terms of assembly, interacts with CtaB. It depends on heme b as a cofactor.

It is found in the cell membrane. The catalysed reaction is Fe(II)-heme o + 2 A + H2O = Fe(II)-heme a + 2 AH2. Its pathway is porphyrin-containing compound metabolism; heme A biosynthesis; heme A from heme O: step 1/1. In terms of biological role, catalyzes the conversion of heme O to heme A by two successive hydroxylations of the methyl group at C8. The first hydroxylation forms heme I, the second hydroxylation results in an unstable dihydroxymethyl group, which spontaneously dehydrates, resulting in the formyl group of heme A. The chain is Heme A synthase from Bacillus cereus (strain 03BB102).